Reading from the N-terminus, the 152-residue chain is Small ribosomal subunit protein bS6 (152 aa).

The segment at 94–152 (VKQEGPLPTPKPSNKSSTQSENKDNPETKVESKEEQSVTNSDTSTTKKDDNEIKENTES) is disordered. Composition is skewed to basic and acidic residues over residues 114 to 129 (ENKD…KEEQ) and 138 to 152 (TTKK…NTES).

It belongs to the bacterial ribosomal protein bS6 family.

Its function is as follows. Binds together with bS18 to 16S ribosomal RNA. This chain is Small ribosomal subunit protein bS6, found in Prochlorococcus marinus (strain MIT 9312).